The chain runs to 78 residues: Acyl carrier protein (78 aa).

The 76-residue stretch at 2–77 (SDIAERVKKI…DAVKFIEKAQ (76 aa)) folds into the Carrier domain. At S37 the chain carries O-(pantetheine 4'-phosphoryl)serine.

The protein belongs to the acyl carrier protein (ACP) family. Post-translationally, 4'-phosphopantetheine is transferred from CoA to a specific serine of apo-ACP by AcpS. This modification is essential for activity because fatty acids are bound in thioester linkage to the sulfhydryl of the prosthetic group.

It is found in the cytoplasm. Its pathway is lipid metabolism; fatty acid biosynthesis. In terms of biological role, carrier of the growing fatty acid chain in fatty acid biosynthesis. In Sinorhizobium fredii (strain NBRC 101917 / NGR234), this protein is Acyl carrier protein.